The chain runs to 328 residues: 4-hydroxy-3-methylbut-2-enyl diphosphate reductase (328 aa).

C24 serves as a coordination point for [4Fe-4S] cluster. 2 residues coordinate (2E)-4-hydroxy-3-methylbut-2-enyl diphosphate: H55 and H88. Dimethylallyl diphosphate contacts are provided by H55 and H88. Isopentenyl diphosphate is bound by residues H55 and H88. C110 is a binding site for [4Fe-4S] cluster. Position 138 (H138) interacts with (2E)-4-hydroxy-3-methylbut-2-enyl diphosphate. H138 is a binding site for dimethylallyl diphosphate. Residue H138 participates in isopentenyl diphosphate binding. Residue E140 is the Proton donor of the active site. (2E)-4-hydroxy-3-methylbut-2-enyl diphosphate is bound at residue T178. Position 208 (C208) interacts with [4Fe-4S] cluster. (2E)-4-hydroxy-3-methylbut-2-enyl diphosphate is bound by residues S236, S237, N238, and S279. The dimethylallyl diphosphate site is built by S236, S237, N238, and S279. Isopentenyl diphosphate contacts are provided by S236, S237, N238, and S279.

Belongs to the IspH family. It depends on [4Fe-4S] cluster as a cofactor.

The enzyme catalyses isopentenyl diphosphate + 2 oxidized [2Fe-2S]-[ferredoxin] + H2O = (2E)-4-hydroxy-3-methylbut-2-enyl diphosphate + 2 reduced [2Fe-2S]-[ferredoxin] + 2 H(+). The catalysed reaction is dimethylallyl diphosphate + 2 oxidized [2Fe-2S]-[ferredoxin] + H2O = (2E)-4-hydroxy-3-methylbut-2-enyl diphosphate + 2 reduced [2Fe-2S]-[ferredoxin] + 2 H(+). It participates in isoprenoid biosynthesis; dimethylallyl diphosphate biosynthesis; dimethylallyl diphosphate from (2E)-4-hydroxy-3-methylbutenyl diphosphate: step 1/1. The protein operates within isoprenoid biosynthesis; isopentenyl diphosphate biosynthesis via DXP pathway; isopentenyl diphosphate from 1-deoxy-D-xylulose 5-phosphate: step 6/6. Its function is as follows. Catalyzes the conversion of 1-hydroxy-2-methyl-2-(E)-butenyl 4-diphosphate (HMBPP) into a mixture of isopentenyl diphosphate (IPP) and dimethylallyl diphosphate (DMAPP). Acts in the terminal step of the DOXP/MEP pathway for isoprenoid precursor biosynthesis. This is 4-hydroxy-3-methylbut-2-enyl diphosphate reductase from Ehrlichia ruminantium (strain Welgevonden).